Here is a 144-residue protein sequence, read N- to C-terminus: Large ribosomal subunit protein bL31c (144 aa).

The transit peptide at 1–48 (MAVSLPNSFLQISPCVPSLQLRKPVMAAVKGGKQSVRRSSNTVVQITC) directs the protein to the chloroplast.

This sequence belongs to the bacterial ribosomal protein bL31 family. Type A subfamily. Part of the 50S ribosomal subunit.

The protein resides in the plastid. Its subcellular location is the chloroplast. Its function is as follows. Binds the 23S rRNA. This Arabidopsis thaliana (Mouse-ear cress) protein is Large ribosomal subunit protein bL31c (RPL31).